Reading from the N-terminus, the 92-residue chain is Small ribosomal subunit protein uS19 (92 aa).

This sequence belongs to the universal ribosomal protein uS19 family.

Functionally, protein S19 forms a complex with S13 that binds strongly to the 16S ribosomal RNA. This is Small ribosomal subunit protein uS19 (rpsS) from Geobacillus stearothermophilus (Bacillus stearothermophilus).